Reading from the N-terminus, the 123-residue chain is Small ribosomal subunit protein uS12 (123 aa).

The interval 1 to 31 (MPTINQLIRKPREAQKARDKAPALQASPQKR) is disordered. Residues 10–21 (KPREAQKARDKA) are compositionally biased toward basic and acidic residues. Asp-89 carries the 3-methylthioaspartic acid modification.

This sequence belongs to the universal ribosomal protein uS12 family. In terms of assembly, part of the 30S ribosomal subunit. Contacts proteins S8 and S17. May interact with IF1 in the 30S initiation complex.

In terms of biological role, with S4 and S5 plays an important role in translational accuracy. Its function is as follows. Interacts with and stabilizes bases of the 16S rRNA that are involved in tRNA selection in the A site and with the mRNA backbone. Located at the interface of the 30S and 50S subunits, it traverses the body of the 30S subunit contacting proteins on the other side and probably holding the rRNA structure together. The combined cluster of proteins S8, S12 and S17 appears to hold together the shoulder and platform of the 30S subunit. The polypeptide is Small ribosomal subunit protein uS12 (Xanthobacter autotrophicus (strain ATCC BAA-1158 / Py2)).